A 215-amino-acid chain; its full sequence is Small ribosomal subunit protein uS2 (215 aa).

Belongs to the universal ribosomal protein uS2 family.

This Caldivirga maquilingensis (strain ATCC 700844 / DSM 13496 / JCM 10307 / IC-167) protein is Small ribosomal subunit protein uS2.